Reading from the N-terminus, the 1160-residue chain is Nck-associated protein 1 homolog (1160 aa).

The protein belongs to the HEM-1/HEM-2 family. In terms of assembly, part of a Scar/WAVE complex containing brk1, scrA, abiA, pirA and napA.

Involved in regulation of actin and microtubule organization. Involved in cell adhesion. This chain is Nck-associated protein 1 homolog (napA), found in Dictyostelium discoideum (Social amoeba).